Reading from the N-terminus, the 1022-residue chain is Sodium-dependent transporter snf-12 (1022 aa).

The Cytoplasmic segment spans residues 1-165; that stretch reads MNGEWKSALR…RRELWRTQKD (165 aa). A helical transmembrane segment spans residues 166–185; it reads FFLSCLGFMVGVGHTMRFPA. Residues 186–192 are Extracellular-facing; it reads KVYQHGG. A helical membrane pass occupies residues 193–213; that stretch reads GVFFIPYLFSLIFFGLPLVFL. At 214 to 241 the chain is on the cytoplasmic side; it reads HLSLGQYTGQAANTAFQRLMPIGSGVGW. The chain crosses the membrane as a helical span at residues 242–262; the sequence is ALVVIAIPVAVYYNIIVAWAI. Residues 263–337 are Extracellular-facing; it reads HYFFQSAKGL…DFALGPLQSH (75 aa). The helical transmembrane segment at 338–358 threads the bilayer; that stretch reads LVLSLAAAWLLVFFGVFKGLG. A topological domain (cytoplasmic) is located at residue Ser359. A helical transmembrane segment spans residues 360–380; it reads IAQTMNVTATVPYLLLSILLL. At 381-412 the chain is on the extracellular side; the sequence is RGISLPGANKGLTFLFTVDSTKLWKWQIWKSA. A helical membrane pass occupies residues 413-433; it reads AEQVFYELGIDAGPLISMAAF. Residues 434–444 are Cytoplasmic-facing; sequence SRYRNNIYRDS. Residues 445–465 form a helical membrane-spanning segment; the sequence is VLLVIMDALTSCLSGMVIFSF. The Extracellular segment spans residues 466-498; the sequence is VGFIASESNSNVNDVLKHDPLYLSFTVYPGVTS. A helical transmembrane segment spans residues 499 to 519; that stretch reads FMYWGGLWATLFFGMLVLAAI. Residues 520–550 are Cytoplasmic-facing; that stretch reads DAEFAWLEMIASAFMNHFSMKNKAVENRLLA. Residues 551-571 form a helical membrane-spanning segment; sequence FLCLAGFFLGLPLCAQGGIFV. The Extracellular portion of the chain corresponds to 572–584; the sequence is FHAIENLNANWNS. The chain crosses the membrane as a helical span at residues 585-605; the sequence is FSLALLSVAIVCYVYGIDNYL. Residues 606–641 lie on the Cytoplasmic side of the membrane; it reads TDISAMLRVPRIQISKATRLKEKLIYFFGPGGIYIK. Residues 642–662 form a helical membrane-spanning segment; sequence FSLCFICPVILTVLLVASVLG. Residues 663–677 are Extracellular-facing; sequence YQRISFAGRPIPIDY. Residues 678–698 form a helical membrane-spanning segment; that stretch reads EIVAWIVMIGPLLVVPLVAFM. Residues 699–1022 lie on the Cytoplasmic side of the membrane; sequence QIRQIRNEGK…RPKPIDMPPK (324 aa). Disordered stretches follow at residues 867–948 and 995–1022; these read RIPN…SSDD and IYDQ…MPPK. Pro residues predominate over residues 893 to 907; that stretch reads SDPPVPTSPLPPPPK. Over residues 933–943 the composition is skewed to low complexity; that stretch reads DDSPSISNSSD.

This sequence belongs to the sodium:neurotransmitter symporter (SNF) (TC 2.A.22) family. May interact with STAT family transcription factor sta-2; the interaction is probably direct.

Its subcellular location is the membrane. The protein resides in the cytoplasm. It localises to the vesicle. In terms of biological role, probably mediates sodium-dependent uptake of unknown small molecule(s). By positively modulating expression, in the epidermis, of antimicrobial peptides such as nlp-29, plays a role in resistance to fungal infection and in the response to physical wounding and phorbol ester PMA treatment. Role in response to wounding of the epidermis may be facilitated by recruitment of snf-12 to the wound site by microtubule-dependent vesicle trafficking. Functions cell autonomously in the epidermis, in concert with STAT transcription factor sta-2, probably acting at vesicular membranes, downstream of a p38 MAPK/pmk-1 pathway. The chain is Sodium-dependent transporter snf-12 from Caenorhabditis elegans.